A 461-amino-acid chain; its full sequence is Cysteine--tRNA ligase (461 aa).

Zn(2+) is bound at residue C28. Positions 30–40 (VTIYDLCHIGH) match the 'HIGH' region motif. Zn(2+) is bound by residues C209, H234, and E238. Residues 266 to 270 (KMSKS) carry the 'KMSKS' region motif. K269 lines the ATP pocket.

This sequence belongs to the class-I aminoacyl-tRNA synthetase family. In terms of assembly, monomer. It depends on Zn(2+) as a cofactor.

The protein resides in the cytoplasm. It catalyses the reaction tRNA(Cys) + L-cysteine + ATP = L-cysteinyl-tRNA(Cys) + AMP + diphosphate. The sequence is that of Cysteine--tRNA ligase from Hamiltonella defensa subsp. Acyrthosiphon pisum (strain 5AT).